The chain runs to 362 residues: Myricetin 3'/5'-O-methyltransferase 1 (362 aa).

Asp229 contacts S-adenosyl-L-methionine. His267 serves as the catalytic Proton acceptor.

This sequence belongs to the class I-like SAM-binding methyltransferase superfamily. Cation-independent O-methyltransferase family. Homodimer. In terms of tissue distribution, mainly expressed in leaves secreting glandular trichomes types 1 and 4 and, to a lesser extent, in storage trichomes type 6.

It carries out the reaction myricetin + S-adenosyl-L-methionine = laricitrin + S-adenosyl-L-homocysteine + H(+). The catalysed reaction is laricitrin + S-adenosyl-L-methionine = syringetin + S-adenosyl-L-homocysteine + H(+). The enzyme catalyses a 3'-hydroxyflavone + S-adenosyl-L-methionine = a 3'-methoxyflavone + S-adenosyl-L-homocysteine + H(+). It catalyses the reaction a 5'-hydroxy-3'-methoxyflavone + S-adenosyl-L-methionine = a 3',5'-dimethoxyflavone + S-adenosyl-L-homocysteine + H(+). It carries out the reaction quercetin + S-adenosyl-L-methionine = isorhamnetin + S-adenosyl-L-homocysteine + H(+). The catalysed reaction is rhamnetin + S-adenosyl-L-methionine = rhamnacene + S-adenosyl-L-homocysteine + H(+). The enzyme catalyses 3',4',5,7-tetrahydroxy-3-methoxyflavone + S-adenosyl-L-methionine = 3,3'-O-dimethylquercetin + S-adenosyl-L-homocysteine + H(+). Its pathway is flavonoid metabolism. Its function is as follows. Flavonoid 3'/5'-O-methyltransferase involved in the biosynthesis of polymethoxylated flavonoids natural products such as myricetin derivatives, aroma compounds possessing antioxidant properties and exhibiting pharmacological activities such as anti-carcinogen, anti-viral, anti-thrombotic, anti-diabetic, anti-atherosclerotic, and anti-inflammatory effects. Catalyzes S-adenosylmethionine-dependent regioselective 3'/5'-O-methylation of flavonoids; active on various hydroxylated flavonoid substrates, including myricetin and quercetin, but inactive toward kaempferol. Mediates the formation of 3'-methyl derivatives from quercetin, myricetin, 3-methyl quercetin and 7-methyl quercetin (rhamnetin), producing 3'-methyl quercetin (isorhamnetin), 3'-methyl myricetin (laricitrin), 3,3'-dimethyl quercetin (3-O-methylisorhamnetin) and 7,3'-dimethyl quercetin (7-O-methylisorhamnetin), respectively. Triggers the 5'-O-methylation of 3'-methyl myricetin (laricitrin), thus leading to production of 3',5'-dimethyl myricetin (syringetin). The sequence is that of Myricetin 3'/5'-O-methyltransferase 1 from Solanum habrochaites (Wild tomato).